We begin with the raw amino-acid sequence, 122 residues long: Large ribosomal subunit protein uL14 (122 aa).

Belongs to the universal ribosomal protein uL14 family. As to quaternary structure, part of the 50S ribosomal subunit. Forms a cluster with proteins L3 and L19. In the 70S ribosome, L14 and L19 interact and together make contacts with the 16S rRNA in bridges B5 and B8.

In terms of biological role, binds to 23S rRNA. Forms part of two intersubunit bridges in the 70S ribosome. The chain is Large ribosomal subunit protein uL14 from Chlamydia abortus (strain DSM 27085 / S26/3) (Chlamydophila abortus).